A 150-amino-acid polypeptide reads, in one-letter code: Large ribosomal subunit protein bL9 (150 aa).

The protein belongs to the bacterial ribosomal protein bL9 family.

Binds to the 23S rRNA. This Streptococcus pyogenes serotype M18 (strain MGAS8232) protein is Large ribosomal subunit protein bL9.